Consider the following 581-residue polypeptide: Moesin/ezrin/radixin homolog 1 (581 aa).

The FERM domain maps to 8–298 (MNVRVTTMDA…GNHELYMRRR (291 aa)). The segment at 452 to 519 (QVAKGSRAAA…EERRTLAERN (68 aa)) is disordered. Residues 459-469 (AAAALQAATTT) are compositionally biased toward low complexity. Residues 477-486 (EEEENEEELI) are compositionally biased toward acidic residues. Positions 495–519 (FSKDFDTDEHIKDPVEERRTLAERN) are enriched in basic and acidic residues. Thr562 is modified (phosphothreonine).

In terms of assembly, interacts with cytoskeletal actin.

It is found in the cell junction. Its subcellular location is the adherens junction. The protein resides in the cell projection. It localises to the microvillus. The protein localises to the rhabdomere. It is found in the cell membrane. Its subcellular location is the cytoplasm. The protein resides in the cytoskeleton. Involved in connections of major cytoskeletal structures to the plasma membrane. In Anopheles gambiae (African malaria mosquito), this protein is Moesin/ezrin/radixin homolog 1.